Reading from the N-terminus, the 285-residue chain is MAAASEPVDSGALWGLERPEPPPTRFHRVHGANIRVDPSGTRATRVESFAHGVCFSREPLAPGQVFLVEIEEKELGWCGHLRLGLTALDPASLAPVPEFSLPDLVNLGHTWVFAITRHHNRVPREGRPEAEAAAPSRPPTLLVEPYLRIEQFRIPRDRLVGRSRPGLYSHLLDQLYELNVLPPTARRSRLGVLFCPRPDGTADMHIIINGEDMGPSARGLPAAQPLYAVVDVFASTKSVRLVQLEYGLPSLQTLCRLVIQRSMVHRLAIDGLHLPKELKDFCKYE.

Residues 1–20 (MAAASEPVDSGALWGLERPE) are disordered. One can recognise an NHR domain in the interval 23 to 244 (PTRFHRVHGA…STKSVRLVQL (222 aa)). Residues 250–285 (SLQTLCRLVIQRSMVHRLAIDGLHLPKELKDFCKYE) form the SOCS box domain.

In terms of assembly, probable component the ECS(NEURL2) E3 ubiquitin-protein ligase complex consisting of ELOB/Elongin B, ELOC/Elongin C, CUL5, RBX1 and NEURL2. Interacts with CTNNB1. As to expression, expressed specifically in skeletal and cardiac muscles.

The protein localises to the cytoplasm. It participates in protein modification; protein ubiquitination. Its function is as follows. Plays an important role in the process of myofiber differentiation and maturation. Probable substrate-recognition component of a SCF-like ECS (Elongin BC-CUL2/5-SOCS-box protein) E3 ubiquitin-protein ligase complex, which mediates the ubiquitination of proteins. Probably contributes to catalysis through recognition and positioning of the substrate and the ubiquitin-conjugating enzyme. During myogenesis, controls the ubiquitination and degradation of the specific pool of CTNNB1/beta-catenin located at the sarcolemma. This chain is Neuralized-like protein 2 (NEURL2), found in Homo sapiens (Human).